The sequence spans 126 residues: Fatty acid-binding protein, liver (126 aa).

Cholate-binding positions include 54 to 56 (TPN), 99 to 101 (HEQ), and arginine 121.

This sequence belongs to the calycin superfamily. Fatty-acid binding protein (FABP) family.

It localises to the cytoplasm. FABPs are thought to play a role in the intracellular transport of long-chain fatty acids and their acyl-CoA esters. This is Fatty acid-binding protein, liver from Anolis pulchellus (Common grass anole).